A 117-amino-acid chain; its full sequence is Large ribosomal subunit protein uL22c (117 aa).

This sequence belongs to the universal ribosomal protein uL22 family. In terms of assembly, part of the 50S ribosomal subunit.

It localises to the plastid. The protein localises to the chloroplast. In terms of biological role, this protein binds specifically to 23S rRNA. Its function is as follows. The globular domain of the protein is located near the polypeptide exit tunnel on the outside of the subunit, while an extended beta-hairpin is found that lines the wall of the exit tunnel in the center of the 70S ribosome. The chain is Large ribosomal subunit protein uL22c (rpl22) from Pyropia yezoensis (Susabi-nori).